Here is a 203-residue protein sequence, read N- to C-terminus: Small ribosomal subunit protein uS4 (203 aa).

Residues 22 to 45 (TGKELARRPYKPGQHGPNSRGKVS) form a disordered region. One can recognise an S4 RNA-binding domain in the interval 93-156 (QRLDNVVYRL…QNISTIKEAV (64 aa)).

Belongs to the universal ribosomal protein uS4 family. In terms of assembly, part of the 30S ribosomal subunit. Contacts protein S5. The interaction surface between S4 and S5 is involved in control of translational fidelity.

Its function is as follows. One of the primary rRNA binding proteins, it binds directly to 16S rRNA where it nucleates assembly of the body of the 30S subunit. Functionally, with S5 and S12 plays an important role in translational accuracy. This is Small ribosomal subunit protein uS4 from Enterococcus faecalis (strain ATCC 700802 / V583).